We begin with the raw amino-acid sequence, 408 residues long: Serine/threonine-protein kinase UCNL (408 aa).

The Protein kinase domain occupies 21-341 (IKALKILGKG…AAEIKELAFF (321 aa)). Residues 27-35 (LGKGATGTV) and Lys-54 each bind ATP. The Proton acceptor role is filled by Asp-152. Positions 342-408 (AGVRWDLLTE…CRKNDPFIEF (67 aa)) constitute an AGC-kinase C-terminal domain.

It belongs to the protein kinase superfamily. AGC Ser/Thr protein kinase family. In terms of tissue distribution, expressed in the epidermis and cortex of the transition zone of the root apex. Expressed in rosette leaves, stems, flowers and siliques.

The protein localises to the cytoplasm. It localises to the nucleus. The enzyme catalyses L-seryl-[protein] + ATP = O-phospho-L-seryl-[protein] + ADP + H(+). It carries out the reaction L-threonyl-[protein] + ATP = O-phospho-L-threonyl-[protein] + ADP + H(+). Functionally, regulates planar ovule integument development. The protein is Serine/threonine-protein kinase UCNL of Arabidopsis thaliana (Mouse-ear cress).